A 581-amino-acid chain; its full sequence is Adenine deaminase (581 aa).

This sequence belongs to the metallo-dependent hydrolases superfamily. Adenine deaminase family. Mn(2+) serves as cofactor.

It carries out the reaction adenine + H2O + H(+) = hypoxanthine + NH4(+). The protein is Adenine deaminase of Brucella melitensis biotype 1 (strain ATCC 23456 / CCUG 17765 / NCTC 10094 / 16M).